A 589-amino-acid polypeptide reads, in one-letter code: Transmembrane 9 superfamily member 3 (589 aa).

The first 28 residues, 1–28 (MRPLPGALGVAAAAALWLLLLLLPRTRA), serve as a signal peptide directing secretion. An N-linked (GlcNAc...) asparagine glycan is attached at N174. 5 helical membrane-spanning segments follow: residues 224-244 (FSIFNSFMMVIFLVGLVSMIL), 294-314 (LIGSGCQIFAVSLIVIIVAMI), 328-348 (AIFVYAATSPVNGYFGGSLYA), 360-380 (FIGAFLIPAMVCGTAFFINFI), and 389-409 (AIPFGTMVAVCCICFFVILPL). N-linked (GlcNAc...) asparagine glycosylation occurs at N419. Helical transmembrane passes span 449–469 (IVCLGGILPFGSIFIEMYFIF), 482–502 (GFMMLVLVILCIVTVCVTIVC), 519–539 (FLSAASTAIYVYMYSFYYYFF), and 551–571 (FYFGYMAVFSTALGIMCGAIG).

The protein belongs to the nonaspanin (TM9SF) (TC 9.A.2) family.

Its subcellular location is the membrane. The chain is Transmembrane 9 superfamily member 3 (TM9SF3) from Homo sapiens (Human).